We begin with the raw amino-acid sequence, 626 residues long: tRNA uridine 5-carboxymethylaminomethyl modification enzyme MnmG (626 aa).

13–18 is a binding site for FAD; that stretch reads GGGHAG. NAD(+) is bound at residue 273 to 287; sequence GPRYCPSIEDKIHRF.

The protein belongs to the MnmG family. Homodimer. Heterotetramer of two MnmE and two MnmG subunits. FAD serves as cofactor.

The protein localises to the cytoplasm. NAD-binding protein involved in the addition of a carboxymethylaminomethyl (cmnm) group at the wobble position (U34) of certain tRNAs, forming tRNA-cmnm(5)s(2)U34. In Acinetobacter baumannii (strain ACICU), this protein is tRNA uridine 5-carboxymethylaminomethyl modification enzyme MnmG.